The following is a 26-amino-acid chain: Stage V sporulation protein M (26 aa).

The important for localization stretch occupies residues 3-9 (FYTIKLP).

Interacts with SpoIVA. May interact with the ATP-dependent protease FtsH.

The protein resides in the forespore outer membrane. Coordinates cortex and coat assembly during sporulation. Associates with the spore coat protein SpoIVA and with the outer forespore membrane, thereby serving as a membrane anchor that tethers SpoIVA and the entire spore coat to the forespore surface. May also serve as a competitive inhibitor of FtsH activity during sporulation. The chain is Stage V sporulation protein M from Bacillus subtilis (strain 168).